The following is a 506-amino-acid chain: Maturase K (506 aa).

It belongs to the intron maturase 2 family. MatK subfamily.

The protein resides in the plastid. It localises to the chloroplast. Usually encoded in the trnK tRNA gene intron. Probably assists in splicing its own and other chloroplast group II introns. This chain is Maturase K, found in Mimosa pudica (Sensitive plant).